Consider the following 175-residue polypeptide: MLTMAEKRNIFLVGPMGAGKSTIGRHLAQQLHMEFFDSDTVIEDRTGADISWVFDVEGEEGFRVREEGVIDDLTQEQGIVLATGGGSVVSKENRNRLSARGVVVYLETTIEKQLARTQRDKKRPLLQTDAPREVLEALAAERNPMYEEVSDYVVRTDDQSAKVVANQIINMLEER.

17-22 (GAGKST) contributes to the ATP binding site. Ser21 contacts Mg(2+). 3 residues coordinate substrate: Asp39, Arg63, and Gly85. Arg123 contacts ATP. Arg142 contacts substrate. Gln159 is an ATP binding site.

It belongs to the shikimate kinase family. Monomer. The cofactor is Mg(2+).

It is found in the cytoplasm. The catalysed reaction is shikimate + ATP = 3-phosphoshikimate + ADP + H(+). The protein operates within metabolic intermediate biosynthesis; chorismate biosynthesis; chorismate from D-erythrose 4-phosphate and phosphoenolpyruvate: step 5/7. Its function is as follows. Catalyzes the specific phosphorylation of the 3-hydroxyl group of shikimic acid using ATP as a cosubstrate. In Photobacterium profundum (strain SS9), this protein is Shikimate kinase.